Reading from the N-terminus, the 656-residue chain is Translation factor GUF1 homolog, mitochondrial (656 aa).

One can recognise a tr-type G domain in the interval Gln55–Asp236. Residues Ala64–Ser71, Asp129–His133, and Asn183–Asp186 contribute to the GTP site.

Belongs to the TRAFAC class translation factor GTPase superfamily. Classic translation factor GTPase family. LepA subfamily.

The protein resides in the mitochondrion inner membrane. The enzyme catalyses GTP + H2O = GDP + phosphate + H(+). Promotes mitochondrial protein synthesis. May act as a fidelity factor of the translation reaction, by catalyzing a one-codon backward translocation of tRNAs on improperly translocated ribosomes. Binds to mitochondrial ribosomes in a GTP-dependent manner. This Aedes aegypti (Yellowfever mosquito) protein is Translation factor GUF1 homolog, mitochondrial.